Consider the following 245-residue polypeptide: tRNA pseudouridine synthase A (245 aa).

D52 serves as the catalytic Nucleophile. Y111 provides a ligand contact to substrate.

It belongs to the tRNA pseudouridine synthase TruA family. In terms of assembly, homodimer.

The catalysed reaction is uridine(38/39/40) in tRNA = pseudouridine(38/39/40) in tRNA. Its function is as follows. Formation of pseudouridine at positions 38, 39 and 40 in the anticodon stem and loop of transfer RNAs. This chain is tRNA pseudouridine synthase A, found in Bradyrhizobium diazoefficiens (strain JCM 10833 / BCRC 13528 / IAM 13628 / NBRC 14792 / USDA 110).